Reading from the N-terminus, the 395-residue chain is Immunity-related GTPase family M protein 2 (395 aa).

The region spanning 63 to 239 (NKIKIAVTGD…PKLRETLQKD (177 aa)) is the IRG-type G domain. Residues 72–79 (DSGNGMSS), 97–101 (TGVVR), and 179–181 (KLD) each bind GTP.

It belongs to the TRAFAC class dynamin-like GTPase superfamily. IRG family. Ubiquitinated; polyubiquitinated in the cytosol, promoting Gbp1 recruitment to the T.gondii parasitophorous vacuole membranes.

Its subcellular location is the cytoplasmic vesicle membrane. The protein localises to the golgi apparatus membrane. It localises to the cytoplasm. It is found in the cytosol. The catalysed reaction is GTP + H2O = GDP + phosphate + H(+). Its function is as follows. Immunity-related GTPase that plays important roles in innate immunity and inflammatory response. Acts as a dynamin-like protein that binds to intracellular membranes and promotes remodeling and trafficking of those membranes. Required for clearance of acute protozoan and bacterial infections. Acts by participating to Tgtp1/Irgb6 and Gbp1-mediated parasite killing by promoting their accumulation on the T.gondii parasitophorous vacuole membranes. Also required for prolonged loading of ubiquitin and p62/Sqstm1 to parasitophorous vacuole membranes. Also acts as a key negative regulator of the inflammatory response by inhibiting the non-canonical inflammasome, thereby protecting against Casp11-driven septic shock during endotoxemia. This Mus musculus (Mouse) protein is Immunity-related GTPase family M protein 2.